The following is a 266-amino-acid chain: Putative carbamate hydrolase RutD (266 aa).

Residues Ala-15–Ala-128 form the AB hydrolase-1 domain.

It belongs to the AB hydrolase superfamily. Hydrolase RutD family.

It carries out the reaction carbamate + 2 H(+) = NH4(+) + CO2. Functionally, involved in pyrimidine catabolism. May facilitate the hydrolysis of carbamate, a reaction that can also occur spontaneously. This is Putative carbamate hydrolase RutD from Variovorax paradoxus (strain S110).